A 143-amino-acid polypeptide reads, in one-letter code: Large ribosomal subunit protein uL16 (143 aa).

It belongs to the universal ribosomal protein uL16 family. In terms of assembly, part of the 50S ribosomal subunit.

Functionally, binds 23S rRNA and is also seen to make contacts with the A and possibly P site tRNAs. The protein is Large ribosomal subunit protein uL16 of Fusobacterium nucleatum subsp. nucleatum (strain ATCC 25586 / DSM 15643 / BCRC 10681 / CIP 101130 / JCM 8532 / KCTC 2640 / LMG 13131 / VPI 4355).